The primary structure comprises 146 residues: Hemoglobin subunit beta (146 aa).

Valine 1 carries the post-translational modification N-acetylvaline. Positions 2–146 (HLTADEKAAV…VATALAHKYH (145 aa)) constitute a Globin domain. Threonine 12 bears the Phosphothreonine mark. At serine 44 the chain carries Phosphoserine. Lysine 59 bears the N6-acetyllysine mark. Histidine 63 lines the heme b pocket. Lysine 82 is subject to N6-acetyllysine. Residue histidine 92 participates in heme b binding. Position 93 is an S-nitrosocysteine (cysteine 93). Lysine 144 is modified (N6-acetyllysine).

The protein belongs to the globin family. Heterotetramer of two alpha chains and two beta chains. As to expression, red blood cells.

Involved in oxygen transport from the lung to the various peripheral tissues. This chain is Hemoglobin subunit beta (HBB), found in Taphozous georgianus (Sharp-nosed tomb bat).